The chain runs to 325 residues: MVRTPSKAKRDRVVVIGTGHVGSSYAFALMNQGVAKELVIIDIDQEKASGDVMDLNHGQAFAPSVTSIWHGNYEDCKEADVVCISAGANQKPGETRLDLLEKNVIIFKEVVDAVMASGFNGIFLVATNPVDLLTQATQVFSGLPKKRVIGSGTTLDTARLRFMLGEYFQISAKHVHAYVVGEHGDSALPLWSTATIGNVPLSQYLLRNRAYKKADLDDIFTNVRDAAYEIIHKKGATYYGIAMSLVRITKALLKNEHAVMTVSTFLNGEFGAKEVCIAVPAIVNRNGVREVLELKLNDIERQQFTESVQMLKGTYKTIMQTGHSF.

NAD(+) is bound by residues V21, D42, K47, Y73, and 87–88 (GA). Substrate is bound by residues Q90, R96, and 128–131 (NPVD). Residues 126–128 (ATN) and S151 contribute to the NAD(+) site. 156–159 (DTAR) is a substrate binding site. Residues R161 and H176 each contribute to the beta-D-fructose 1,6-bisphosphate site. The active-site Proton acceptor is H183. Y228 carries the phosphotyrosine modification. T237 is a substrate binding site.

Belongs to the LDH/MDH superfamily. LDH family. In terms of assembly, homotetramer.

Its subcellular location is the cytoplasm. The enzyme catalyses (S)-lactate + NAD(+) = pyruvate + NADH + H(+). It participates in fermentation; pyruvate fermentation to lactate; (S)-lactate from pyruvate: step 1/1. Allosterically activated by fructose 1,6-bisphosphate (FBP). Its function is as follows. Catalyzes the conversion of lactate to pyruvate. In Shouchella clausii (strain KSM-K16) (Alkalihalobacillus clausii), this protein is L-lactate dehydrogenase.